The sequence spans 284 residues: Release factor glutamine methyltransferase (284 aa).

Residues glycine 121–glycine 125, aspartate 144, tryptophan 172, and asparagine 188 contribute to the S-adenosyl-L-methionine site. Residue asparagine 188–tyrosine 191 coordinates substrate.

The protein belongs to the protein N5-glutamine methyltransferase family. PrmC subfamily.

The enzyme catalyses L-glutaminyl-[peptide chain release factor] + S-adenosyl-L-methionine = N(5)-methyl-L-glutaminyl-[peptide chain release factor] + S-adenosyl-L-homocysteine + H(+). Its function is as follows. Methylates the class 1 translation termination release factors RF1/PrfA and RF2/PrfB on the glutamine residue of the universally conserved GGQ motif. The chain is Release factor glutamine methyltransferase from Aliivibrio fischeri (strain ATCC 700601 / ES114) (Vibrio fischeri).